Reading from the N-terminus, the 239-residue chain is Ribonuclease PH (239 aa).

Residues arginine 86 and 124–126 each bind phosphate; that span reads GTR.

Belongs to the RNase PH family. In terms of assembly, homohexameric ring arranged as a trimer of dimers.

It carries out the reaction tRNA(n+1) + phosphate = tRNA(n) + a ribonucleoside 5'-diphosphate. Functionally, phosphorolytic 3'-5' exoribonuclease that plays an important role in tRNA 3'-end maturation. Removes nucleotide residues following the 3'-CCA terminus of tRNAs; can also add nucleotides to the ends of RNA molecules by using nucleoside diphosphates as substrates, but this may not be physiologically important. Probably plays a role in initiation of 16S rRNA degradation (leading to ribosome degradation) during starvation. The polypeptide is Ribonuclease PH (Anaeromyxobacter dehalogenans (strain 2CP-1 / ATCC BAA-258)).